A 156-amino-acid chain; its full sequence is Ribosome maturation factor RimP (156 aa).

Belongs to the RimP family.

Its subcellular location is the cytoplasm. In terms of biological role, required for maturation of 30S ribosomal subunits. This chain is Ribosome maturation factor RimP, found in Synechococcus sp. (strain JA-2-3B'a(2-13)) (Cyanobacteria bacterium Yellowstone B-Prime).